The sequence spans 164 residues: Pheromone-binding protein 2 (164 aa).

Residues 1–22 (MIRKVLLSVLLAVLMTINLGQA) form the signal peptide. 3 disulfides stabilise this stretch: Cys-41–Cys-76, Cys-72–Cys-130, and Cys-119–Cys-139.

It belongs to the PBP/GOBP family. Antenna.

Functionally, this major soluble protein in olfactory sensilla of male moths might serve to solubilize the extremely hydrophobic pheromone molecules and to transport pheromone through the aqueous lymph to receptors located on olfactory cilia. This chain is Pheromone-binding protein 2, found in Antheraea pernyi (Chinese oak silk moth).